Here is a 226-residue protein sequence, read N- to C-terminus: Myosin regulatory light chain 10 (226 aa).

EF-hand domains follow at residues 84–119, 154–189, and 190–225; these read NSPASASQAFTIMDQNRDGFIDKEDLRDTFAALGRI, DPEETILHAFKVFDTEGKGFVKADVIKEKLMTQADR, and FSEEEVKQMFAAFPPDVCGNLDYRNLCYVITHGEEK. Positions 97, 99, 101, and 108 each coordinate Ca(2+).

In terms of assembly, myosin is a hexamer of 2 heavy chains and 4 light chains.

This is Myosin regulatory light chain 10 (MYL10) from Homo sapiens (Human).